A 292-amino-acid polypeptide reads, in one-letter code: Mycothiol acetyltransferase (292 aa).

N-acetyltransferase domains follow at residues 13-168 (ALDR…KWLQ) and 159-292 (KSVA…VYEK). Glutamate 40 contacts 1D-myo-inositol 2-(L-cysteinylamino)-2-deoxy-alpha-D-glucopyranoside. 77–79 (LAV) lines the acetyl-CoA pocket. The 1D-myo-inositol 2-(L-cysteinylamino)-2-deoxy-alpha-D-glucopyranoside site is built by glutamate 179, lysine 218, and glutamate 226. Acetyl-CoA-binding positions include 230 to 232 (VGL) and 237 to 243 (RGRGLGD). Tyrosine 264 is a 1D-myo-inositol 2-(L-cysteinylamino)-2-deoxy-alpha-D-glucopyranoside binding site.

Belongs to the acetyltransferase family. MshD subfamily. Monomer.

The enzyme catalyses 1D-myo-inositol 2-(L-cysteinylamino)-2-deoxy-alpha-D-glucopyranoside + acetyl-CoA = mycothiol + CoA + H(+). Catalyzes the transfer of acetyl from acetyl-CoA to desacetylmycothiol (Cys-GlcN-Ins) to form mycothiol. This Corynebacterium glutamicum (strain ATCC 13032 / DSM 20300 / JCM 1318 / BCRC 11384 / CCUG 27702 / LMG 3730 / NBRC 12168 / NCIMB 10025 / NRRL B-2784 / 534) protein is Mycothiol acetyltransferase.